We begin with the raw amino-acid sequence, 917 residues long: Transcriptional regulatory protein SEF1 (917 aa).

A disordered region spans residues 1 to 88 (MKFEKGKVRI…SKPTGHRPVT (88 aa)). The segment covering 13 to 27 (KPSPTPTNPQTPLPL) has biased composition (pro residues). Residues 56–70 (SNSTASTPNSATPTS) are compositionally biased toward low complexity. Positions 71-81 (VGTPPQKTSKP) are enriched in polar residues. The segment at residues 90-120 (CTFCRQHKIKCNASDNYPNPCERCKKMGLKC) is a DNA-binding region (zn(2)-C6 fungal-type). Residues 129-164 (RKGSQIQSLKSDVDELKAKIEMLTKNESLLTQALNQ) adopt a coiled-coil conformation. 2 disordered regions span residues 168–212 (NHAS…ASPI) and 778–849 (QQYP…PFIL). The span at 171-184 (SQQQQSSGSQSQQQ) shows a compositional bias: low complexity. The span at 191-212 (RALSYTSANSSPQVAFSNASPI) shows a compositional bias: polar residues. The segment covering 778-827 (QQYPMQQDQQQQEPSQQQQQKHSQQSQQYQQQQQSNQQQPHLQHQRQFQQ) has biased composition (low complexity).

In terms of assembly, interacts with SSN3 and SFU1. Phosphorylated by SSN3 under iron-depleted conditions which leads to nuclear localization.

The protein localises to the cytoplasm. It localises to the nucleus. Functionally, transcription factor which plays an essential role in virulence by activating the transcription of iron uptake genes such as FRE7 in iron-poor environments such as the host bloodstream and internal organs. Promotes commensalism in a mouse model of gastrointestinal infection. This is Transcriptional regulatory protein SEF1 (SEF1) from Candida albicans (strain SC5314 / ATCC MYA-2876) (Yeast).